A 136-amino-acid chain; its full sequence is Small ribosomal subunit protein uS8c (136 aa).

The protein belongs to the universal ribosomal protein uS8 family. In terms of assembly, part of the 30S ribosomal subunit.

It is found in the plastid. The protein resides in the chloroplast. Functionally, one of the primary rRNA binding proteins, it binds directly to 16S rRNA central domain where it helps coordinate assembly of the platform of the 30S subunit. The protein is Small ribosomal subunit protein uS8c (rps8) of Oryza sativa subsp. indica (Rice).